The primary structure comprises 145 residues: uncharacterized protein (145 aa).

Belongs to the methyltransferase superfamily.

Probable methyltransferase. This is an uncharacterized protein from Schizosaccharomyces pombe (strain 972 / ATCC 24843) (Fission yeast).